We begin with the raw amino-acid sequence, 1101 residues long: ATP-dependent DNA helicase mph1 (1101 aa).

Disordered regions lie at residues 22–59 (PGTS…SPDR), 95–138 (LTQP…QYHD), 154–231 (FEEE…TNRP), and 250–270 (SSQR…PTHH). A compositionally biased stretch (polar residues) spans 24–48 (TSDTVESVQTNNRPAKQSDISISQG). A compositionally biased stretch (low complexity) spans 170 to 190 (TPARTAAAPCAAPKGTAADVP). Positions 191 to 202 (FDLDDIPDDAFD) are enriched in acidic residues. Residues 209–228 (PPRSTSQATRGPPVQSQFRT) are compositionally biased toward polar residues. Residues 296–464 (IAQRGLFHNL…AIIDDLGIAK (169 aa)) form the Helicase ATP-binding domain. Position 309-316 (309-316 (LPTGLGKT)) interacts with ATP. A DEAH box motif is present at residues 412-415 (DEAH). One can recognise a Helicase C-terminal domain in the interval 634-808 (YLKQVVLNHF…GTRFTFHDDK (175 aa)). 2 disordered regions span residues 824–890 (RQID…PTPE) and 991–1067 (SRDP…QDAF). The span at 842–854 (RRARPPKRPPKKF) shows a compositional bias: basic residues.

It belongs to the DEAD box helicase family. DEAH subfamily. FANCM sub-subfamily. As to quaternary structure, interacts with the MHF histone-fold complex to form the FANCM-MHF complex.

Its subcellular location is the nucleus. It carries out the reaction ATP + H2O = ADP + phosphate + H(+). Its function is as follows. ATP-dependent DNA helicase involved in DNA damage repair by homologous recombination and in genome maintenance. Capable of unwinding D-loops. Plays a role in limiting crossover recombinants during mitotic DNA double-strand break (DSB) repair. Component of a FANCM-MHF complex which promotes gene conversion at blocked replication forks, probably by reversal of the stalled fork. This Aspergillus fumigatus (strain CBS 144.89 / FGSC A1163 / CEA10) (Neosartorya fumigata) protein is ATP-dependent DNA helicase mph1.